Reading from the N-terminus, the 469-residue chain is Mitochondrial-processing peptidase subunit beta (469 aa).

A Zn(2+)-binding site is contributed by histidine 78. Glutamate 81 (proton acceptor) is an active-site residue. Residues histidine 82 and glutamate 159 each contribute to the Zn(2+) site.

Belongs to the peptidase M16 family. In terms of assembly, heterodimer of alpha and beta subunits, forming the mitochondrial processing protease (MPP) in which subunit alpha is involved in substrate recognition and binding and subunit beta is the catalytic subunit. mppB is probably also part of the cytochrome bc1 complex as a core I protein in the mitochondrial inner membrane. The cofactor is Zn(2+).

Its subcellular location is the mitochondrion inner membrane. It is found in the mitochondrion matrix. It carries out the reaction Release of N-terminal transit peptides from precursor proteins imported into the mitochondrion, typically with Arg in position P2.. With respect to regulation, binding to alpha subunit is required for catalytic activity. Catalytic subunit of the essential mitochondrial processing protease (MPP), which cleaves the mitochondrial sequence off newly imported precursors proteins. Preferentially, cleaves after an arginine at position P2. Plays an essential role in mitochondrial biogenesis. This chain is Mitochondrial-processing peptidase subunit beta (mppB), found in Dictyostelium discoideum (Social amoeba).